The following is a 590-amino-acid chain: MQCEEAHVLVLYTGGTIGMKYIDGVYQPEANYLLHAIRDLSLLNDDDYVSTYYSDAEIRPYCLPPLQHSKKRVVYWMIEYDPLLDSSDMTFDDWIHIGKDIQRAYDQYVGFVILHGTDTLAYTACALSFMLENVRKPIVITGAQIPVCEVRSDGRENLIGALIIAANYDIPEVTVYFNNKLFRGNRTVKIDNRSMDAFESPNMLPIAYMDVDIKVNYDSIFRSPSMAPFVVHDQLCRNVGLLRIFPSMSIENVRASLQAPIEGVVLQTFGAGNMPSHRTDIIDELKKAVDRGCIIINCSQCVRGQVDIHYLTGKVLYDMGIIPGSDMTAEAALTKLSYVLSKDCWELVEKKAMMVKNIRGELTVAKAEPLKDLEIVSQMARFLHLSSSHEMKLLCHAIFPQLLCYAASNGDIEMLKALHENGVDLSVVDYNGRNALHVAASAGHVGAVKYLLTQGVSFHLRDQWDENALVSAVKMKNKILIETLRSAGALLSINSRRLGVELCLCASYGDTETLNSWLAAGADINQQDYNGETALHIAVKSRNKQLVHYLLDRDADPYKIDDFNLTPLRHAKKLNLQDLVIRMKKMKKVQ.

The Asparaginase/glutaminase domain maps to 6 to 357 (AHVLVLYTGG…VEKKAMMVKN (352 aa)). Thr-16 (O-isoaspartyl threonine intermediate) is an active-site residue. An asparaginase region spans residues 44–351 (NDDDYVSTYY…KDCWELVEKK (308 aa)). Substrate is bound by residues 85-87 (DSS) and 117-118 (TD). ANK repeat units follow at residues 398 to 427 (IFPQ…DLSV), 431 to 460 (NGRN…SFHL), 497 to 526 (RLGV…DINQ), and 530 to 559 (NGET…DPYK).

This sequence in the N-terminal section; belongs to the asparaginase 1 family. May be present in the larval cuticle.

It catalyses the reaction L-asparagine + H2O = L-aspartate + NH4(+). The chain is L-asparaginase from Dirofilaria immitis (Canine heartworm).